The chain runs to 239 residues: Phosducin-like protein 3 (239 aa).

Position 1 is an N-acetylmethionine (methionine 1). In terms of domain architecture, Phosducin spans 32 to 180 (EAEEEQRILQ…EGDIKAQFIG (149 aa)). At serine 43 the chain carries Phosphoserine. The thioredoxin fold stretch occupies residues 91–239 (FGEVLEISGK…MKRDSDSEGD (149 aa)). Interaction with XIAP regions lie at residues 97-99 (ISG) and 153-155 (TCI). Residues serine 234 and serine 236 each carry the phosphoserine modification.

This sequence belongs to the phosducin family. In terms of assembly, interacts (via thioredoxin fold region) with KDR/VEGFR2 (via juxtamembrane domain). Forms ternary complexes with the chaperonin CCT complex and actin substrate, leading to inhibition of actin folding. Interacts with XIAP (via BIR 3 and RING domain). Interacts with HSP90AA1 and HSP90AB1. Post-translationally, N-terminal methionine acetylation destabilizes the protein. As to expression, expressed in endothelial cells (at protein level). Expressed in all tissues examined including spleen, thymus, prostate, testis, ovary, small intestine and colon.

It localises to the cytoplasm. The protein localises to the perinuclear region. Its subcellular location is the endoplasmic reticulum. Acts as a chaperone for the angiogenic VEGF receptor KDR/VEGFR2, increasing its abundance by inhibiting its ubiquitination and degradation. Inhibits the folding activity of the chaperonin-containing T-complex (CCT) which leads to inhibition of cytoskeletal actin folding. Acts as a chaperone during heat shock alongside HSP90 and HSP40/70 chaperone complexes. Modulates the activation of caspases during apoptosis. This is Phosducin-like protein 3 (PDCL3) from Homo sapiens (Human).